A 594-amino-acid chain; its full sequence is Putative lipase ATG15-1 (594 aa).

Residues 1 to 12 (MRRRPLCTSASR) are Cytoplasmic-facing. A helical; Signal-anchor for type II membrane protein membrane pass occupies residues 13–33 (VTASLLLSFLAVSSAAELPIL). Over 34–594 (PAPPISPQPH…ANHFVYVLHA (561 aa)) the chain is Lumenal. N-linked (GlcNAc...) asparagine glycans are attached at residues Asn-144, Asn-179, Asn-201, Asn-259, and Asn-283. The active-site Charge relay system is Ser-299. N-linked (GlcNAc...) asparagine glycans are attached at residues Asn-432 and Asn-445. Residues 447-469 (TETTTTSTSKPTSTSKSSKSNTR) show a composition bias toward low complexity. Disordered regions lie at residues 447 to 473 (TETT…TRTE) and 489 to 509 (TGTQ…TSTC). 2 N-linked (GlcNAc...) asparagine glycosylation sites follow: Asn-576 and Asn-582.

The protein belongs to the AB hydrolase superfamily. Lipase family. As to quaternary structure, binds to both phosphatidylinositol (PI) and phosphatidylinositol 3,5-bisphosphate (PIP2).

Its subcellular location is the endosome. The protein localises to the multivesicular body membrane. It is found in the prevacuolar compartment membrane. It catalyses the reaction a triacylglycerol + H2O = a diacylglycerol + a fatty acid + H(+). Its function is as follows. Lipase which is essential for lysis of subvacuolar cytoplasm to vacuole targeted bodies and intravacuolar autophagic bodies. Involved in the lysis of intravacuolar multivesicular body (MVB) vesicles. The intravacuolar membrane disintegration by ATG15 is critical to life span extension. This Phaeosphaeria nodorum (strain SN15 / ATCC MYA-4574 / FGSC 10173) (Glume blotch fungus) protein is Putative lipase ATG15-1 (ATG15-1).